The primary structure comprises 400 residues: Nicotinate phosphoribosyltransferase (400 aa).

Phosphohistidine; by autocatalysis is present on histidine 220.

The protein belongs to the NAPRTase family. Transiently phosphorylated on a His residue during the reaction cycle. Phosphorylation strongly increases the affinity for substrates and increases the rate of nicotinate D-ribonucleotide production. Dephosphorylation regenerates the low-affinity form of the enzyme, leading to product release.

It catalyses the reaction nicotinate + 5-phospho-alpha-D-ribose 1-diphosphate + ATP + H2O = nicotinate beta-D-ribonucleotide + ADP + phosphate + diphosphate. The protein operates within cofactor biosynthesis; NAD(+) biosynthesis; nicotinate D-ribonucleotide from nicotinate: step 1/1. Its function is as follows. Catalyzes the synthesis of beta-nicotinate D-ribonucleotide from nicotinate and 5-phospho-D-ribose 1-phosphate at the expense of ATP. This chain is Nicotinate phosphoribosyltransferase, found in Escherichia coli O45:K1 (strain S88 / ExPEC).